The sequence spans 263 residues: Ribonuclease HII (263 aa).

An RNase H type-2 domain is found at 71-262 (KAIAGIDEVG…VKSMCCDSTN (192 aa)). Asp77, Glu78, and Asp172 together coordinate a divalent metal cation.

The protein belongs to the RNase HII family. It depends on Mn(2+) as a cofactor. Requires Mg(2+) as cofactor.

The protein localises to the cytoplasm. The enzyme catalyses Endonucleolytic cleavage to 5'-phosphomonoester.. Endonuclease that specifically degrades the RNA of RNA-DNA hybrids. The protein is Ribonuclease HII of Streptococcus pyogenes serotype M1.